The primary structure comprises 258 residues: Imidazole glycerol phosphate synthase subunit HisF (258 aa).

Residues D11 and D130 contribute to the active site.

It belongs to the HisA/HisF family. Heterodimer of HisH and HisF.

The protein localises to the cytoplasm. The catalysed reaction is 5-[(5-phospho-1-deoxy-D-ribulos-1-ylimino)methylamino]-1-(5-phospho-beta-D-ribosyl)imidazole-4-carboxamide + L-glutamine = D-erythro-1-(imidazol-4-yl)glycerol 3-phosphate + 5-amino-1-(5-phospho-beta-D-ribosyl)imidazole-4-carboxamide + L-glutamate + H(+). The protein operates within amino-acid biosynthesis; L-histidine biosynthesis; L-histidine from 5-phospho-alpha-D-ribose 1-diphosphate: step 5/9. IGPS catalyzes the conversion of PRFAR and glutamine to IGP, AICAR and glutamate. The HisF subunit catalyzes the cyclization activity that produces IGP and AICAR from PRFAR using the ammonia provided by the HisH subunit. In Magnetococcus marinus (strain ATCC BAA-1437 / JCM 17883 / MC-1), this protein is Imidazole glycerol phosphate synthase subunit HisF.